The chain runs to 273 residues: 4-hydroxybenzoate octaprenyltransferase (273 aa).

8 consecutive transmembrane segments (helical) span residues 7-27, 30-50, 83-103, 122-142, 146-166, 197-217, 221-241, and 253-273; these read IGIY…SEGF, LKLL…GCVI, FFVL…WLTI, WTYF…LMAF, LNEI…WTVI, LIIG…SNVF, ISYH…QYLI, and FLHN…SVGL.

This sequence belongs to the UbiA prenyltransferase family. Mg(2+) is required as a cofactor.

Its subcellular location is the cell inner membrane. It carries out the reaction all-trans-octaprenyl diphosphate + 4-hydroxybenzoate = 4-hydroxy-3-(all-trans-octaprenyl)benzoate + diphosphate. Its pathway is cofactor biosynthesis; ubiquinone biosynthesis. In terms of biological role, catalyzes the prenylation of para-hydroxybenzoate (PHB) with an all-trans polyprenyl group. Mediates the second step in the final reaction sequence of ubiquinone-8 (UQ-8) biosynthesis, which is the condensation of the polyisoprenoid side chain with PHB, generating the first membrane-bound Q intermediate 3-octaprenyl-4-hydroxybenzoate. This Vesicomyosocius okutanii subsp. Calyptogena okutanii (strain HA) protein is 4-hydroxybenzoate octaprenyltransferase.